Reading from the N-terminus, the 339-residue chain is Phenylalanine--tRNA ligase alpha subunit (339 aa).

Glutamate 254 serves as a coordination point for Mg(2+).

It belongs to the class-II aminoacyl-tRNA synthetase family. Phe-tRNA synthetase alpha subunit type 1 subfamily. In terms of assembly, tetramer of two alpha and two beta subunits. It depends on Mg(2+) as a cofactor.

Its subcellular location is the cytoplasm. It catalyses the reaction tRNA(Phe) + L-phenylalanine + ATP = L-phenylalanyl-tRNA(Phe) + AMP + diphosphate + H(+). This chain is Phenylalanine--tRNA ligase alpha subunit, found in Dictyoglomus turgidum (strain DSM 6724 / Z-1310).